The following is a 192-amino-acid chain: Phosphoheptose isomerase (192 aa).

In terms of domain architecture, SIS spans 37 to 192 (LADSFKAGGK…IQLIEKEMEK (156 aa)). 52–54 (NGG) provides a ligand contact to substrate. Zn(2+) contacts are provided by His-61 and Glu-65. Residues Glu-65, 93 to 94 (ND), 119 to 121 (STS), Ser-124, and Gln-172 each bind substrate. Zn(2+)-binding residues include Gln-172 and His-180.

This sequence belongs to the SIS family. GmhA subfamily. Homotetramer. Zn(2+) is required as a cofactor.

It localises to the cytoplasm. It catalyses the reaction 2 D-sedoheptulose 7-phosphate = D-glycero-alpha-D-manno-heptose 7-phosphate + D-glycero-beta-D-manno-heptose 7-phosphate. It functions in the pathway carbohydrate biosynthesis; D-glycero-D-manno-heptose 7-phosphate biosynthesis; D-glycero-alpha-D-manno-heptose 7-phosphate and D-glycero-beta-D-manno-heptose 7-phosphate from sedoheptulose 7-phosphate: step 1/1. Functionally, catalyzes the isomerization of sedoheptulose 7-phosphate in D-glycero-D-manno-heptose 7-phosphate. This is Phosphoheptose isomerase from Proteus mirabilis (strain HI4320).